We begin with the raw amino-acid sequence, 227 residues long: Pyridoxine-5'-phosphate oxidase (227 aa).

20 to 23 contacts pyridoxal 5'-phosphate; sequence RKDY. 75–78 lines the FMN pocket; that stretch reads RVVL. Position 80 (K80) interacts with pyridoxal 5'-phosphate. Residues 90–91, 96–97, and Q117 each bind FMN; these read YT and RK. Residues Y135, R139, and S143 each contribute to the pyridoxal 5'-phosphate site. FMN is bound by residues 152-153 and W197; that span reads FQ. Pyridoxal 5'-phosphate is bound at residue 203–205; it reads RIH. R207 contacts FMN.

Belongs to the pyridoxamine 5'-phosphate oxidase family. As to quaternary structure, homodimer. FMN is required as a cofactor.

It carries out the reaction pyridoxamine 5'-phosphate + O2 + H2O = pyridoxal 5'-phosphate + H2O2 + NH4(+). The enzyme catalyses pyridoxine 5'-phosphate + O2 = pyridoxal 5'-phosphate + H2O2. It functions in the pathway cofactor metabolism; pyridoxal 5'-phosphate salvage; pyridoxal 5'-phosphate from pyridoxamine 5'-phosphate: step 1/1. The protein operates within cofactor metabolism; pyridoxal 5'-phosphate salvage; pyridoxal 5'-phosphate from pyridoxine 5'-phosphate: step 1/1. Its function is as follows. Catalyzes the oxidation of either pyridoxine 5'-phosphate (PNP) or pyridoxamine 5'-phosphate (PMP) into pyridoxal 5'-phosphate (PLP). In Dictyostelium discoideum (Social amoeba), this protein is Pyridoxine-5'-phosphate oxidase (pnpo).